We begin with the raw amino-acid sequence, 148 residues long: Small ribosomal subunit protein uS15 (148 aa).

The span at 1–14 (MGRLHSHRHGKSHS) shows a compositional bias: basic residues. The disordered stretch occupies residues 1 to 27 (MGRLHSHRHGKSHSIRPSSPKAPSWIQ).

It belongs to the universal ribosomal protein uS15 family. As to quaternary structure, part of the 30S ribosomal subunit.

This Cenarchaeum symbiosum (strain A) protein is Small ribosomal subunit protein uS15.